Reading from the N-terminus, the 365-residue chain is tRNA 2-selenouridine synthase (365 aa).

In terms of domain architecture, Rhodanese spans 15-138 (LVNDHPIMDA…MRQFLIETID (124 aa)). The active-site S-selanylcysteine intermediate is C98.

The protein belongs to the SelU family. Monomer.

The enzyme catalyses 5-methylaminomethyl-2-thiouridine(34) in tRNA + selenophosphate + (2E)-geranyl diphosphate + H2O + H(+) = 5-methylaminomethyl-2-selenouridine(34) in tRNA + (2E)-thiogeraniol + phosphate + diphosphate. It catalyses the reaction 5-methylaminomethyl-2-thiouridine(34) in tRNA + (2E)-geranyl diphosphate = 5-methylaminomethyl-S-(2E)-geranyl-thiouridine(34) in tRNA + diphosphate. It carries out the reaction 5-methylaminomethyl-S-(2E)-geranyl-thiouridine(34) in tRNA + selenophosphate + H(+) = 5-methylaminomethyl-2-(Se-phospho)selenouridine(34) in tRNA + (2E)-thiogeraniol. The catalysed reaction is 5-methylaminomethyl-2-(Se-phospho)selenouridine(34) in tRNA + H2O = 5-methylaminomethyl-2-selenouridine(34) in tRNA + phosphate. Its function is as follows. Involved in the post-transcriptional modification of the uridine at the wobble position (U34) of tRNA(Lys), tRNA(Glu) and tRNA(Gln). Catalyzes the conversion of 2-thiouridine (S2U-RNA) to 2-selenouridine (Se2U-RNA). Acts in a two-step process involving geranylation of 2-thiouridine (S2U) to S-geranyl-2-thiouridine (geS2U) and subsequent selenation of the latter derivative to 2-selenouridine (Se2U) in the tRNA chain. The sequence is that of tRNA 2-selenouridine synthase from Shewanella pealeana (strain ATCC 700345 / ANG-SQ1).